The primary structure comprises 128 residues: Aspartate 1-decarboxylase (128 aa).

Serine 25 (schiff-base intermediate with substrate; via pyruvic acid) is an active-site residue. At serine 25 the chain carries Pyruvic acid (Ser). Threonine 57 provides a ligand contact to substrate. The active-site Proton donor is the tyrosine 58. 73-75 is a substrate binding site; that stretch reads GAA.

This sequence belongs to the PanD family. In terms of assembly, heterooctamer of four alpha and four beta subunits. Pyruvate serves as cofactor. In terms of processing, is synthesized initially as an inactive proenzyme, which is activated by self-cleavage at a specific serine bond to produce a beta-subunit with a hydroxyl group at its C-terminus and an alpha-subunit with a pyruvoyl group at its N-terminus.

It localises to the cytoplasm. The catalysed reaction is L-aspartate + H(+) = beta-alanine + CO2. It participates in cofactor biosynthesis; (R)-pantothenate biosynthesis; beta-alanine from L-aspartate: step 1/1. In terms of biological role, catalyzes the pyruvoyl-dependent decarboxylation of aspartate to produce beta-alanine. In Caldicellulosiruptor bescii (strain ATCC BAA-1888 / DSM 6725 / KCTC 15123 / Z-1320) (Anaerocellum thermophilum), this protein is Aspartate 1-decarboxylase.